The following is a 334-amino-acid chain: Beta-hexosaminidase (334 aa).

Substrate-binding positions include Asp62, Arg70, Arg130, and 160 to 161 (KH). His173 acts as the Proton donor/acceptor in catalysis. The active-site Nucleophile is Asp243.

The protein belongs to the glycosyl hydrolase 3 family. NagZ subfamily.

Its subcellular location is the cytoplasm. It carries out the reaction Hydrolysis of terminal non-reducing N-acetyl-D-hexosamine residues in N-acetyl-beta-D-hexosaminides.. It participates in cell wall biogenesis; peptidoglycan recycling. In terms of biological role, plays a role in peptidoglycan recycling by cleaving the terminal beta-1,4-linked N-acetylglucosamine (GlcNAc) from peptide-linked peptidoglycan fragments, giving rise to free GlcNAc, anhydro-N-acetylmuramic acid and anhydro-N-acetylmuramic acid-linked peptides. The chain is Beta-hexosaminidase from Photobacterium profundum (strain SS9).